The sequence spans 202 residues: Translation initiation factor IF-3 (202 aa).

Residues 178 to 202 form a disordered region; sequence TPRKTPLLKKESETTEPKKALRSIN. Basic and acidic residues predominate over residues 185–196; the sequence is LKKESETTEPKK.

Belongs to the IF-3 family. Monomer.

Its subcellular location is the cytoplasm. In terms of biological role, IF-3 binds to the 30S ribosomal subunit and shifts the equilibrium between 70S ribosomes and their 50S and 30S subunits in favor of the free subunits, thus enhancing the availability of 30S subunits on which protein synthesis initiation begins. In Prochlorococcus marinus (strain NATL1A), this protein is Translation initiation factor IF-3.